A 140-amino-acid chain; its full sequence is Holo-[acyl-carrier-protein] synthase (140 aa).

The Mg(2+) site is built by Asp-8 and Glu-62.

Belongs to the P-Pant transferase superfamily. AcpS family. Mg(2+) is required as a cofactor.

The protein localises to the cytoplasm. The enzyme catalyses apo-[ACP] + CoA = holo-[ACP] + adenosine 3',5'-bisphosphate + H(+). In terms of biological role, transfers the 4'-phosphopantetheine moiety from coenzyme A to a Ser of acyl-carrier-protein. This chain is Holo-[acyl-carrier-protein] synthase, found in Cupriavidus necator (strain ATCC 17699 / DSM 428 / KCTC 22496 / NCIMB 10442 / H16 / Stanier 337) (Ralstonia eutropha).